The chain runs to 455 residues: Argininosuccinate lyase (455 aa).

It belongs to the lyase 1 family. Argininosuccinate lyase subfamily.

The protein resides in the cytoplasm. The catalysed reaction is 2-(N(omega)-L-arginino)succinate = fumarate + L-arginine. It functions in the pathway amino-acid biosynthesis; L-arginine biosynthesis; L-arginine from L-ornithine and carbamoyl phosphate: step 3/3. The protein is Argininosuccinate lyase of Shewanella baltica (strain OS185).